Consider the following 229-residue polypeptide: Protein AF_2251 (229 aa).

The protein belongs to the CinA family.

This is Protein AF_2251 from Archaeoglobus fulgidus (strain ATCC 49558 / DSM 4304 / JCM 9628 / NBRC 100126 / VC-16).